The sequence spans 222 residues: Small ribosomal subunit protein uS3 (222 aa).

Residues Ile-38–Lys-106 form the KH type-2 domain.

It belongs to the universal ribosomal protein uS3 family. In terms of assembly, part of the 30S ribosomal subunit. Forms a tight complex with proteins S10 and S14.

Functionally, binds the lower part of the 30S subunit head. Binds mRNA in the 70S ribosome, positioning it for translation. In Lactobacillus johnsonii (strain CNCM I-12250 / La1 / NCC 533), this protein is Small ribosomal subunit protein uS3.